The chain runs to 210 residues: Large ribosomal subunit protein bL25 (210 aa).

Positions 191–210 (KPAPKAAETDEDGEEAASEE) are disordered. Positions 199 to 210 (TDEDGEEAASEE) are enriched in acidic residues.

It belongs to the bacterial ribosomal protein bL25 family. CTC subfamily. In terms of assembly, part of the 50S ribosomal subunit; part of the 5S rRNA/L5/L18/L25 subcomplex. Contacts the 5S rRNA. Binds to the 5S rRNA independently of L5 and L18.

Its function is as follows. This is one of the proteins that binds to the 5S RNA in the ribosome where it forms part of the central protuberance. The sequence is that of Large ribosomal subunit protein bL25 from Alteromonas mediterranea (strain DSM 17117 / CIP 110805 / LMG 28347 / Deep ecotype).